The sequence spans 142 residues: Small ribosomal subunit protein bS6 (142 aa).

The segment covering 110-133 (NKKPSHAKEKHEKTEHTHSHHTEE) has biased composition (basic and acidic residues). The segment at 110–142 (NKKPSHAKEKHEKTEHTHSHHTEETESVGSHSK) is disordered.

The protein belongs to the bacterial ribosomal protein bS6 family.

Its function is as follows. Binds together with bS18 to 16S ribosomal RNA. This is Small ribosomal subunit protein bS6 from Helicobacter pylori (strain Shi470).